A 337-amino-acid polypeptide reads, in one-letter code: GTPase Obg (337 aa).

Residues 1 to 158 (MFIDEVRILV…KRLRLELKLL (158 aa)) form the Obg domain. Composition is skewed to basic and acidic residues over residues 61 to 74 (NPEHKAERGRHGEG) and 137 to 146 (PTEHEPGRPG). Disordered regions lie at residues 61-83 (NPEHKAERGRHGEGSQRTGAEGR) and 119-146 (GGRGGRGNQHFATPTHQAPTEHEPGRPG). The 172-residue stretch at 159–330 (ADVGLVGFPN…LKHAMADRVL (172 aa)) folds into the OBG-type G domain. GTP is bound by residues 165–172 (GFPNAGKS), 190–194 (FTTLE), 212–215 (DIPG), 282–285 (TKMD), and 311–313 (SSA). Residues Ser-172 and Thr-192 each contribute to the Mg(2+) site.

It belongs to the TRAFAC class OBG-HflX-like GTPase superfamily. OBG GTPase family. In terms of assembly, monomer. It depends on Mg(2+) as a cofactor.

Its subcellular location is the cytoplasm. Functionally, an essential GTPase which binds GTP, GDP and possibly (p)ppGpp with moderate affinity, with high nucleotide exchange rates and a fairly low GTP hydrolysis rate. Plays a role in control of the cell cycle, stress response, ribosome biogenesis and in those bacteria that undergo differentiation, in morphogenesis control. The polypeptide is GTPase Obg (Solibacter usitatus (strain Ellin6076)).